We begin with the raw amino-acid sequence, 209 residues long: Large ribosomal subunit protein uL3 (209 aa).

Q150 carries the N5-methylglutamine modification.

This sequence belongs to the universal ribosomal protein uL3 family. Part of the 50S ribosomal subunit. Forms a cluster with proteins L14 and L19. Methylated by PrmB.

Its function is as follows. One of the primary rRNA binding proteins, it binds directly near the 3'-end of the 23S rRNA, where it nucleates assembly of the 50S subunit. This Ectopseudomonas mendocina (strain ymp) (Pseudomonas mendocina) protein is Large ribosomal subunit protein uL3.